The primary structure comprises 280 residues: 3-methyl-2-oxobutanoate hydroxymethyltransferase (280 aa).

Mg(2+) is bound by residues Asp49 and Asp88. Residues 49 to 50 (DS), Asp88, and Lys118 contribute to the 3-methyl-2-oxobutanoate site. Glu120 is a binding site for Mg(2+). Residue Glu186 is the Proton acceptor of the active site.

Belongs to the PanB family. In terms of assembly, homodecamer; pentamer of dimers. Mg(2+) serves as cofactor.

The protein localises to the cytoplasm. It carries out the reaction 3-methyl-2-oxobutanoate + (6R)-5,10-methylene-5,6,7,8-tetrahydrofolate + H2O = 2-dehydropantoate + (6S)-5,6,7,8-tetrahydrofolate. The protein operates within cofactor biosynthesis; (R)-pantothenate biosynthesis; (R)-pantoate from 3-methyl-2-oxobutanoate: step 1/2. Catalyzes the reversible reaction in which hydroxymethyl group from 5,10-methylenetetrahydrofolate is transferred onto alpha-ketoisovalerate to form ketopantoate. The polypeptide is 3-methyl-2-oxobutanoate hydroxymethyltransferase (Ruegeria sp. (strain TM1040) (Silicibacter sp.)).